Reading from the N-terminus, the 137-residue chain is Small ribosomal subunit protein uS12 (137 aa).

The interval 1-57 (MPTINQLVRKPRQSKSKKSDSPVLNRGFNSKKKQFTNLNSPQKRGVCTRVGTMTPRK) is disordered. At Asp-102 the chain carries 3-methylthioaspartic acid. A disordered region spans residues 118 to 137 (SGVDGRRQGRSLYGTKKPKN).

It belongs to the universal ribosomal protein uS12 family. In terms of assembly, part of the 30S ribosomal subunit. Contacts proteins S8 and S17. May interact with IF1 in the 30S initiation complex.

In terms of biological role, with S4 and S5 plays an important role in translational accuracy. Its function is as follows. Interacts with and stabilizes bases of the 16S rRNA that are involved in tRNA selection in the A site and with the mRNA backbone. Located at the interface of the 30S and 50S subunits, it traverses the body of the 30S subunit contacting proteins on the other side and probably holding the rRNA structure together. The combined cluster of proteins S8, S12 and S17 appears to hold together the shoulder and platform of the 30S subunit. The polypeptide is Small ribosomal subunit protein uS12 (Staphylococcus haemolyticus (strain JCSC1435)).